The primary structure comprises 444 residues: COP9 signalosome complex subunit 2 (444 aa).

The segment at 1-31 (MSDNDDDFMCDDDEDYGLEYSEDSNSEPDVD) is disordered. Residues 255–417 (AHTDFFEAFK…QVLQLDKINS (163 aa)) form the PCI domain.

This sequence belongs to the CSN2 family. In terms of assembly, component of the CSN complex, probably composed of CSN1b, alien/CSN2, CSN3, CSN4, CSN5, CSN6, CSN7 and CSN8. Interacts with Rpn6. As to expression, expressed during embryonic stages 11-14 in the muscle attachment sites (apodemes); pharynx attachment to the roof of the mouth and in the epidermis of the head for the dorsal and ventral prothoracic pharyngeal muscle attachment. From stage 16 onwards expression is seen in all thoracic and abdominal apodemes.

The protein resides in the cytoplasm. The protein localises to the nucleus. Component of the COP9 signalosome complex (CSN), a complex involved in various cellular and developmental processes. The CSN complex is an essential regulator of the ubiquitin (Ubl) conjugation pathway by mediating the deneddylation of the cullin subunits of the SCF-type E3 ligase complexes, leading to decrease the Ubl ligase activity of SCF. The CSN complex plays an essential role in oogenesis and embryogenesis and is required for proper photoreceptor R cell differentiation and promote lamina glial cell migration or axon targeting. It also promotes Ubl-dependent degradation of cyclin E (CycE) during early oogenesis. In Drosophila melanogaster (Fruit fly), this protein is COP9 signalosome complex subunit 2.